Here is a 444-residue protein sequence, read N- to C-terminus: Methionine aminopeptidase 2-1 (444 aa).

A disordered region spans residues 1–92 (MAAQVTEKLQ…VPVSNLFPNN (92 aa)). Residues 15 to 29 (NGQNGDAKANSTAVG) show a composition bias toward polar residues. Residues 34–45 (GEAEDDSDDEKE) are compositionally biased toward acidic residues. A compositionally biased stretch (basic residues) spans 59 to 73 (AKKKKRKSKKKKKGG). Residue histidine 197 coordinates substrate. Residues aspartate 217, aspartate 228, and histidine 297 each coordinate a divalent metal cation. Position 305 (histidine 305) interacts with substrate. A divalent metal cation-binding residues include glutamate 330 and glutamate 425.

It belongs to the peptidase M24A family. Methionine aminopeptidase eukaryotic type 2 subfamily. Requires Co(2+) as cofactor. It depends on Zn(2+) as a cofactor. The cofactor is Mn(2+). Fe(2+) serves as cofactor.

It localises to the cytoplasm. The enzyme catalyses Release of N-terminal amino acids, preferentially methionine, from peptides and arylamides.. Cotranslationally removes the N-terminal methionine from nascent proteins. The N-terminal methionine is often cleaved when the second residue in the primary sequence is small and uncharged (Met-Ala-, Cys, Gly, Pro, Ser, Thr, or Val). This chain is Methionine aminopeptidase 2-1, found in Neosartorya fischeri (strain ATCC 1020 / DSM 3700 / CBS 544.65 / FGSC A1164 / JCM 1740 / NRRL 181 / WB 181) (Aspergillus fischerianus).